Reading from the N-terminus, the 330-residue chain is Ribosomal RNA small subunit methyltransferase H (330 aa).

Residues 40–42 (GGY), D58, F85, D101, and Q108 contribute to the S-adenosyl-L-methionine site.

It belongs to the methyltransferase superfamily. RsmH family.

The protein resides in the cytoplasm. It carries out the reaction cytidine(1402) in 16S rRNA + S-adenosyl-L-methionine = N(4)-methylcytidine(1402) in 16S rRNA + S-adenosyl-L-homocysteine + H(+). Its function is as follows. Specifically methylates the N4 position of cytidine in position 1402 (C1402) of 16S rRNA. The polypeptide is Ribosomal RNA small subunit methyltransferase H (Roseobacter denitrificans (strain ATCC 33942 / OCh 114) (Erythrobacter sp. (strain OCh 114))).